The chain runs to 1117 residues: Cytospin-A (1117 aa).

Disordered regions lie at residues 1–176 (MKKA…NQIS), 293–323 (SLSPEITPGNQSDGGGTLTSSVEGSAPGSVE), and 358–390 (SSDDALDAPSSSESEGIPSIERSRKGSSGNASE). Over residues 45–90 (TAASLSKTKSSDDLLAGMAGGVTVTNGVKGKKSTCPSAAPSASAPA) the composition is skewed to low complexity. Polar residues predominate over residues 93–117 (TVENKSKISTGTASSTKRSTSTGNK). Basic and acidic residues-rich tracts occupy residues 120–131 (SSTRERLRERTR) and 158–171 (TATECDVRMSKSKS). Positions 168-280 (KSKSDNQISD…LNALGFSLEQ (113 aa)) form a coiled coil. The span at 293 to 303 (SLSPEITPGNQ) shows a compositional bias: polar residues. A compositionally biased stretch (low complexity) spans 358 to 377 (SSDDALDAPSSSESEGIPSI). Residues S384, S385, and S389 each carry the phosphoserine modification. 2 coiled-coil regions span residues 394-449 (ACLT…MESL) and 487-807 (RYME…RGRV). A phosphoserine mark is found at S868, S881, and S887. The tract at residues 920 to 997 (TSSASRPASL…PTTRSRIREE (78 aa)) is disordered. Positions 946 to 956 (RSSEEVKRDIS) are enriched in basic and acidic residues. The segment covering 971–990 (TTSPQLSLSSSPTASVTPTT) has biased composition (low complexity). The Calponin-homology (CH) domain maps to 1011–1116 (GSKRNALLKW…YVTAIYKYFE (106 aa)).

It belongs to the cytospin-A family. As to quaternary structure, may interact with both microtubules and actin cytoskeleton.

Its subcellular location is the cytoplasm. It localises to the cytoskeleton. It is found in the spindle. The protein localises to the cell junction. The protein resides in the gap junction. Involved in cytokinesis and spindle organization. May play a role in actin cytoskeleton organization and microtubule stabilization and hence required for proper cell adhesion and migration. In Homo sapiens (Human), this protein is Cytospin-A (SPECC1L).